The chain runs to 344 residues: Probable dual-specificity RNA methyltransferase RlmN (344 aa).

Glu-83 serves as the catalytic Proton acceptor. The region spanning 89–323 is the Radical SAM core domain; sequence YLDRKTICVS…VSVRRSRGKD (235 aa). Cys-96 and Cys-328 form a disulfide bridge. Residues Cys-103, Cys-107, and Cys-110 each contribute to the [4Fe-4S] cluster site. S-adenosyl-L-methionine contacts are provided by residues 153–154, Ser-185, 209–211, and Asn-285; these read GE and SLH. The active-site S-methylcysteine intermediate is the Cys-328.

It belongs to the radical SAM superfamily. RlmN family. It depends on [4Fe-4S] cluster as a cofactor.

It is found in the cytoplasm. The enzyme catalyses adenosine(2503) in 23S rRNA + 2 reduced [2Fe-2S]-[ferredoxin] + 2 S-adenosyl-L-methionine = 2-methyladenosine(2503) in 23S rRNA + 5'-deoxyadenosine + L-methionine + 2 oxidized [2Fe-2S]-[ferredoxin] + S-adenosyl-L-homocysteine. It carries out the reaction adenosine(37) in tRNA + 2 reduced [2Fe-2S]-[ferredoxin] + 2 S-adenosyl-L-methionine = 2-methyladenosine(37) in tRNA + 5'-deoxyadenosine + L-methionine + 2 oxidized [2Fe-2S]-[ferredoxin] + S-adenosyl-L-homocysteine. In terms of biological role, specifically methylates position 2 of adenine 2503 in 23S rRNA and position 2 of adenine 37 in tRNAs. This chain is Probable dual-specificity RNA methyltransferase RlmN, found in Deinococcus geothermalis (strain DSM 11300 / CIP 105573 / AG-3a).